A 264-amino-acid polypeptide reads, in one-letter code: 2-hydroxyhexa-2,4-dienoate hydratase (264 aa).

The protein belongs to the hydratase/decarboxylase family.

The enzyme catalyses (2Z,4Z)-2-hydroxyhexa-2,4-dienoate + H2O = 4-hydroxy-2-oxohexanoate. Functionally, involved in the catatabolism of testosterone. Catalyzes the hydration of 2-hydroxyhexa-2,4-dienoic acid to 4-hydroxy-2-oxohexanoic acid. This Comamonas testosteroni (Pseudomonas testosteroni) protein is 2-hydroxyhexa-2,4-dienoate hydratase (tesE).